Reading from the N-terminus, the 2118-residue chain is Cilia- and flagella-associated protein 65 (2118 aa).

The helical transmembrane segment at 6–26 (GSLRALLLAAAAAAAAAAGAV) threads the bilayer. In terms of domain architecture, MSP spans 615-736 (FLHSNPEFGP…HTPRLTTDLP (122 aa)). Disordered regions lie at residues 1007–1029 (APLL…LDAG), 1764–1909 (SGGS…DDFA), and 1924–1958 (AGGG…APPR). Gly residues predominate over residues 1825 to 1834 (GGAGGAPGGD). Positions 1840–1849 (RPGTPSMTAA) are enriched in low complexity. The span at 1850-1859 (AHHHHHHPRH) shows a compositional bias: basic residues. Low complexity-rich tracts occupy residues 1892-1902 (SISGAPDPDSA) and 1936-1949 (PGGS…ELAP). Residues 2016–2045 (AVRAAAEAARAEAEARAAAEAATKAAAEAE) adopt a coiled-coil conformation.

It belongs to the CFAP65 family.

Its subcellular location is the cell projection. The protein resides in the cilium. It is found in the flagellum membrane. The protein localises to the cytoplasm. In terms of biological role, may play a role in flagellar formation and mobility. The chain is Cilia- and flagella-associated protein 65 from Chlamydomonas reinhardtii (Chlamydomonas smithii).